A 510-amino-acid polypeptide reads, in one-letter code: 2,3-bisphosphoglycerate-independent phosphoglycerate mutase (510 aa).

Residues D13 and S63 each contribute to the Mn(2+) site. S63 serves as the catalytic Phosphoserine intermediate. Residues H124, 154–155, R186, R192, 262–265, and K334 each bind substrate; these read RD and RADR. D401, H405, D442, H443, and H461 together coordinate Mn(2+).

Belongs to the BPG-independent phosphoglycerate mutase family. Monomer. Mn(2+) is required as a cofactor.

The catalysed reaction is (2R)-2-phosphoglycerate = (2R)-3-phosphoglycerate. It participates in carbohydrate degradation; glycolysis; pyruvate from D-glyceraldehyde 3-phosphate: step 3/5. Catalyzes the interconversion of 2-phosphoglycerate and 3-phosphoglycerate. The sequence is that of 2,3-bisphosphoglycerate-independent phosphoglycerate mutase from Vibrio parahaemolyticus serotype O3:K6 (strain RIMD 2210633).